The sequence spans 1084 residues: Probable sucrose-phosphate synthase 1 (1084 aa).

The span at 25–46 shows a compositional bias: gly residues; that stretch reads GGGGGGGGGGGGGGGGGGGGGV. Residues 25 to 61 are disordered; it reads GGGGGGGGGGGGGGGGGGGGGVDPRSPAAGAASPRGP. Residues 48–61 show a composition bias toward low complexity; that stretch reads PRSPAAGAASPRGP.

The protein belongs to the glycosyltransferase 1 family. In terms of assembly, homodimer or homotetramer. In terms of tissue distribution, expressed in leaves mesophyll cells, scutellum of germinating seedlings and pollen of immature inflorescences.

The enzyme catalyses beta-D-fructose 6-phosphate + UDP-alpha-D-glucose = sucrose 6(F)-phosphate + UDP + H(+). The protein operates within glycan biosynthesis; sucrose biosynthesis; sucrose from D-fructose 6-phosphate and UDP-alpha-D-glucose: step 1/2. Activity is regulated by phosphorylation and moderated by concentration of metabolites and light. Plays a role in photosynthetic sucrose synthesis by catalyzing the rate-limiting step of sucrose biosynthesis from UDP-glucose and fructose- 6-phosphate. Involved in the regulation of carbon partitioning in the leaves of plants. May regulate the synthesis of sucrose and therefore play a major role as a limiting factor in the export of photoassimilates out of the leaf. Plays a role for sucrose availability that is essential for plant growth and fiber elongation. This is Probable sucrose-phosphate synthase 1 (SPS1) from Oryza sativa subsp. indica (Rice).